The chain runs to 500 residues: Toluene-4-monooxygenase system, hydroxylase component subunit alpha (500 aa).

Residues Glu-104, Glu-134, His-137, Glu-197, Glu-231, and His-234 each contribute to the Fe cation site.

Belongs to the TmoA/XamoA family. As to quaternary structure, the alkene monooxygenase multicomponent enzyme system is composed of an electron transfer component and a monooxygenase component interacting with the effector protein TmoD. The electron transfer component is composed of a ferredoxin reductase (TmoF) and a ferredoxin (TmoC), and the monooxygenase component is formed by a heterohexamer (dimer of heterotrimers) of two alpha subunits (TmoA), two beta subunits (TmoE) and two gamma subunits (TmoB). The cofactor is Fe(2+).

The catalysed reaction is toluene + NADH + O2 + H(+) = 4-methylphenol + NAD(+) + H2O. Its pathway is xenobiotic degradation; toluene degradation. Inhibited by Zn(2+) and Cu(2+). Component of the toluene-4-monooxygenase multicomponent enzyme system which catalyzes the O2- and NADH-dependent hydroxylation of toluene to form p-cresol. Also able to convert benzene to phenol, catechol, and 1,2,3-trihydroxybenzene by successive hydroxylations. This chain is Toluene-4-monooxygenase system, hydroxylase component subunit alpha, found in Ectopseudomonas mendocina (Pseudomonas mendocina).